Here is a 592-residue protein sequence, read N- to C-terminus: Imidazole glycerol phosphate synthase hisHF, chloroplastic (592 aa).

Residues methionine 1–arginine 55 constitute a chloroplast transit peptide. Positions valine 63–lysine 271 constitute a Glutamine amidotransferase type-1 domain. Residues cysteine 141, histidine 246, and glutamate 248 each act as for GATase activity in the active site. The cyclase stretch occupies residues leucine 280–isoleucine 592. Active-site residues include aspartate 289 and aspartate 447.

In the C-terminal section; belongs to the HisA/HisF family.

The protein resides in the plastid. It is found in the chloroplast. It carries out the reaction 5-[(5-phospho-1-deoxy-D-ribulos-1-ylimino)methylamino]-1-(5-phospho-beta-D-ribosyl)imidazole-4-carboxamide + L-glutamine = D-erythro-1-(imidazol-4-yl)glycerol 3-phosphate + 5-amino-1-(5-phospho-beta-D-ribosyl)imidazole-4-carboxamide + L-glutamate + H(+). The catalysed reaction is L-glutamine + H2O = L-glutamate + NH4(+). It functions in the pathway amino-acid biosynthesis; L-histidine biosynthesis; L-histidine from 5-phospho-alpha-D-ribose 1-diphosphate: step 5/9. Its function is as follows. IGPS catalyzes the conversion of PRFAR and glutamine to IGP, AICAR and glutamate. The glutaminase domain produces the ammonia necessary for the cyclase domain to produce IGP and AICAR from PRFAR. The ammonia is channeled to the active site of the cyclase domain. In Arabidopsis thaliana (Mouse-ear cress), this protein is Imidazole glycerol phosphate synthase hisHF, chloroplastic (HISN4).